Here is a 208-residue protein sequence, read N- to C-terminus: Methyl-CpG-binding domain protein 3-like 3 (208 aa).

The protein belongs to the MBD3L family.

The chain is Methyl-CpG-binding domain protein 3-like 3 (MBD3L3) from Homo sapiens (Human).